The chain runs to 539 residues: MHDKILILDFGSQVTQLIARRVREAHVYCEIHPNDVSDEFVREFAPKAVILSGSHASTYEDHQLRAPQAVWDLGVPVLGICYGMQTMAVQLGGKVEWSDHREFGYAEMRAHGHTRLLDGIEDFTTAEGHGMLKVWMSHGDKVAELPPGFALMASTPSCPIAGMADEARGYYAVQFHPEVTHTVKGRQIIERFVLQIAGAKPDWIMSNHIEEAVAKIREQVGDEEVILGLSGGVDSSVAAALIHRAIGDQLTCVFVDHGLLRLNEGKMVLDMFEGRLHAKVVHVDASEQFLGHLTGVTDPEAKRKIIGREFVEVFQAEAKKLSKAKWLAQGTIYPDVVESGGTKTKKATTIKSHHNVGGLPETLGLKLLEPLRDLFKDEVRELGVALGLPPEMVYRHPFPGPGLGVRILGEVKREYADLLRRADAIFIEELRGTTATTQDAAAGLCGEADVGKTWYDLTSQAFAVFLPVKSVGVMGDGRTYDYVTSLRAVQTTDFMTAHWAHLPYALLGRASNRIINEVRGINRVVYDISGKPPATIEWE.

The Glutamine amidotransferase type-1 domain maps to K4–D202. Residue C81 is the Nucleophile of the active site. Active-site residues include H176 and E178. One can recognise a GMPS ATP-PPase domain in the interval W203–R395. Position 230-236 (S230–S236) interacts with ATP.

As to quaternary structure, homodimer.

The enzyme catalyses XMP + L-glutamine + ATP + H2O = GMP + L-glutamate + AMP + diphosphate + 2 H(+). The protein operates within purine metabolism; GMP biosynthesis; GMP from XMP (L-Gln route): step 1/1. Catalyzes the synthesis of GMP from XMP. The sequence is that of GMP synthase [glutamine-hydrolyzing] from Burkholderia ambifaria (strain MC40-6).